A 266-amino-acid chain; its full sequence is Short-chain dehydrogenase/reductase tropE (266 aa).

Positions 18, 69, and 96 each coordinate NADP(+). The active-site Proton donor is serine 147. Tyrosine 181, lysine 185, and threonine 216 together coordinate NADP(+). Catalysis depends on tyrosine 181, which acts as the Proton acceptor. The Lowers pKa of active site Tyr role is filled by lysine 185.

This sequence belongs to the short-chain dehydrogenases/reductases (SDR) family.

The protein operates within secondary metabolite biosynthesis. Its function is as follows. Short-chain dehydrogenase/reductase; part of the gene cluster that mediates the biosynthesis of the tropolone class of fungal maleic anhydrides. The pathway begins with the synthesis of 3-methylorcinaldehyde by the non-reducing polyketide synthase (PKS) tropA. 3-methylorcinaldehyde is the substrate for the FAD-dependent monooxygenase tropB to yield a dearomatized hydroxycyclohexadione. The 2-oxoglutarate-dependent dioxygenase tropC then performs the oxidative ring expansion to provide the first tropolone metabolite stipitaldehyde. Trop D converts stipitaldehyde into stipitacetal which is in turn converted to stipitalide by the short-chain dehydrogenase/reductase tropE. The next steps involve tropF, tropG, tropH, tropI and tropJ to form successive tropolone maleic anhydrides including stipitaldehydic, stipitatonic and stipitatic acids. This Talaromyces stipitatus (strain ATCC 10500 / CBS 375.48 / QM 6759 / NRRL 1006) (Penicillium stipitatum) protein is Short-chain dehydrogenase/reductase tropE.